The sequence spans 115 residues: uncharacterized protein (115 aa).

2 consecutive transmembrane segments (helical) span residues 11–31 and 85–105; these read FLYLIVAMVILCPLGILLVWN and GYIISAIVGVILCVGAYYALI.

To M.thermoautotrophicum MTH1706.

Its subcellular location is the cell membrane. This is an uncharacterized protein from Methanocaldococcus jannaschii (strain ATCC 43067 / DSM 2661 / JAL-1 / JCM 10045 / NBRC 100440) (Methanococcus jannaschii).